The following is a 1100-amino-acid chain: Serine/threonine/tyrosine-interacting-like protein 2 (1100 aa).

Residues 1–12 (MASSVEDQQLQQ) are compositionally biased toward polar residues. The interval 1-21 (MASSVEDQQLQQEEAESVKDV) is disordered. The region spanning 141–289 (SPVDEVWPNV…LRQLNETLME (149 aa)) is the Tyrosine-protein phosphatase domain. Over residues 356–374 (CGSQQPNMQQPADQPSLPG) the composition is skewed to polar residues. 8 disordered regions span residues 356-383 (CGSQQPNMQQPADQPSLPGQTREDEDGD), 411-436 (EDEDDGEDKTQRAVRPDDLESVTSED), 479-504 (AAARHRLQDQDTSSETQQKKIDDDVQ), 542-561 (KENAENGEQSEAEPAAAPDL), 575-615 (KQQK…ERSR), 667-686 (VLSGRSTRSLPPAVLETPAP), 888-1060 (CEKP…DEEI), and 1075-1100 (VAEEMEDDEVLTAWRKQEESKSHDHK). Positions 418–428 (DKTQRAVRPDD) are enriched in basic and acidic residues. The span at 580–615 (HGGEENKEEILQMSRGEDTATARRRQRREEVLERSR) shows a compositional bias: basic and acidic residues. Residues 667–676 (VLSGRSTRSL) are compositionally biased toward low complexity. The span at 888 to 898 (CEKPKPKRDYG) shows a compositional bias: basic and acidic residues. 3 stretches are compositionally biased toward polar residues: residues 907–916 (ASANNPTSSI), 994–1013 (SYSSRRSPSFNGLSESTSFA), and 1029–1041 (FQNHSIKQKSSVY). Positions 1089 to 1100 (RKQEESKSHDHK) are enriched in basic and acidic residues.

It belongs to the protein-tyrosine phosphatase family. Non-receptor class dual specificity subfamily. As to expression, expressed in muscle fibers in a regular striated pattern (at protein level).

The protein resides in the cytoplasm. The protein localises to the myofibril. Its subcellular location is the sarcomere. In terms of biological role, required for myofiber maturation. This Danio rerio (Zebrafish) protein is Serine/threonine/tyrosine-interacting-like protein 2 (styxl2).